Consider the following 258-residue polypeptide: PF03932 family protein CutC (258 aa).

The protein belongs to the CutC family.

It is found in the cytoplasm. The sequence is that of PF03932 family protein CutC from Mesorhizobium japonicum (strain LMG 29417 / CECT 9101 / MAFF 303099) (Mesorhizobium loti (strain MAFF 303099)).